Reading from the N-terminus, the 267-residue chain is Tryptophan synthase alpha chain (267 aa).

Active-site proton acceptor residues include glutamate 51 and aspartate 62.

Belongs to the TrpA family. Tetramer of two alpha and two beta chains.

The catalysed reaction is (1S,2R)-1-C-(indol-3-yl)glycerol 3-phosphate + L-serine = D-glyceraldehyde 3-phosphate + L-tryptophan + H2O. The protein operates within amino-acid biosynthesis; L-tryptophan biosynthesis; L-tryptophan from chorismate: step 5/5. Functionally, the alpha subunit is responsible for the aldol cleavage of indoleglycerol phosphate to indole and glyceraldehyde 3-phosphate. This is Tryptophan synthase alpha chain from Prochlorococcus marinus (strain SARG / CCMP1375 / SS120).